Here is a 256-residue protein sequence, read N- to C-terminus: MCLETIPTNNKTLALINQGYKVLAEYQMIEQKQLKGIYAIPSYSSGLLWFGVIFIHSGLYAESVFRFSILLPDQFPEESSLPTVIFQKDIFHPHICPVSHSLDLTPLLKEWKKDQHHIWHILKYIQAIFADPEGSVCSTQNGDPIPLTEVNNMEAMRLLANNRVDFAVRAKVSILWSCQHMFDEPPIKDPHYIIFERYCPEKHQAMMERLKSRSWYELSAPKTPKPSVCVARMESARQLIEDEEAQVVNAAGSSLN.

One can recognise a UBC core domain in the interval 17-179 (NQGYKVLAEY…AKVSILWSCQ (163 aa)).

It belongs to the ubiquitin-conjugating enzyme family. FTS subfamily.

This Drosophila virilis (Fruit fly) protein is Protein crossbronx-like.